The sequence spans 129 residues: Ribosome-binding factor A (129 aa).

This sequence belongs to the RbfA family. In terms of assembly, monomer. Binds 30S ribosomal subunits, but not 50S ribosomal subunits or 70S ribosomes.

Its subcellular location is the cytoplasm. One of several proteins that assist in the late maturation steps of the functional core of the 30S ribosomal subunit. Associates with free 30S ribosomal subunits (but not with 30S subunits that are part of 70S ribosomes or polysomes). Required for efficient processing of 16S rRNA. May interact with the 5'-terminal helix region of 16S rRNA. The polypeptide is Ribosome-binding factor A (Pseudomonas aeruginosa (strain UCBPP-PA14)).